We begin with the raw amino-acid sequence, 166 residues long: Glutamyl-tRNA(Gln) amidotransferase subunit C, mitochondrial (166 aa).

The transit peptide at 1 to 44 (MIRGWTIFTLCKPSALVGSSHFNKQFNWAKSQLQFATKVPQQPY) directs the protein to the mitochondrion.

This sequence belongs to the GatC family. As to quaternary structure, subunit of the heterotrimeric GatCAB amidotransferase (AdT) complex, composed of A, B and C subunits.

Its subcellular location is the mitochondrion. It catalyses the reaction L-glutamyl-tRNA(Gln) + L-glutamine + ATP + H2O = L-glutaminyl-tRNA(Gln) + L-glutamate + ADP + phosphate + H(+). Functionally, allows the formation of correctly charged Gln-tRNA(Gln) through the transamidation of misacylated Glu-tRNA(Gln) in the mitochondria. The reaction takes place in the presence of glutamine and ATP through an activated gamma-phospho-Glu-tRNA(Gln). The protein is Glutamyl-tRNA(Gln) amidotransferase subunit C, mitochondrial of Anopheles darlingi (Mosquito).